Consider the following 208-residue polypeptide: RNA-binding protein KhpB (208 aa).

The interval 5–55 is jag_N domain; it reads TAAGRNVDEAVQSGLQELGLTKDKVEITVIEEGNKGFLGIFGKKPAIVKLV. One can recognise a KH domain in the interval 58–135; sequence IDPIQQAKLY…GQYKNVTVDA (78 aa). Residues 140–208 form the R3H domain; it reads LKRKETLSQL…NRHLVISHKR (69 aa).

Belongs to the KhpB RNA-binding protein family. Forms a complex with KhpA.

It is found in the cytoplasm. Its function is as follows. A probable RNA chaperone. Forms a complex with KhpA which binds to cellular RNA and controls its expression. Plays a role in peptidoglycan (PG) homeostasis and cell length regulation. The protein is RNA-binding protein KhpB of Bacillus subtilis (strain 168).